A 436-amino-acid chain; its full sequence is Carboxypeptidase A5 (436 aa).

An N-terminal signal peptide occupies residues 1 to 33 (MQGTPGGGTRPGPSPVDRRTLLVFSFILAAALG). A propeptide spans 34-126 (QMNFTGDQVL…ERQAMAKSRR (93 aa)) (activation peptide). Residues 138–431 (SYHTLEEIYS…MALRTIMEHT (294 aa)) enclose the Peptidase M14 domain. Residues H196 and E199 each coordinate Zn(2+). Substrate contacts are provided by residues 196 to 199 (HSRE), R254, and 271 to 272 (NR). The cysteines at positions 265 and 288 are disulfide-linked. Residue H323 participates in Zn(2+) binding. Substrate-binding positions include 324-325 (SY) and Y375. E397 functions as the Proton donor/acceptor in the catalytic mechanism.

It belongs to the peptidase M14 family. It depends on Zn(2+) as a cofactor. As to expression, expression is very low or not detectable.

It localises to the secreted. In Homo sapiens (Human), this protein is Carboxypeptidase A5 (CPA5).